Consider the following 151-residue polypeptide: RNA polymerase-binding transcription factor DksA (151 aa).

Residues Cys-114, Cys-117, Cys-135, and Cys-138 each contribute to the Zn(2+) site. The dksA C4-type zinc finger occupies 114 to 138; the sequence is CNSCSVEIGIRRLEARPTADLCIDC.

It belongs to the DksA family. In terms of assembly, interacts directly with the RNA polymerase.

The protein resides in the cytoplasm. Transcription factor that acts by binding directly to the RNA polymerase (RNAP). Required for negative regulation of rRNA expression and positive regulation of several amino acid biosynthesis promoters. Also required for regulation of fis expression. The sequence is that of RNA polymerase-binding transcription factor DksA from Buchnera aphidicola subsp. Acyrthosiphon pisum (strain APS) (Acyrthosiphon pisum symbiotic bacterium).